A 500-amino-acid polypeptide reads, in one-letter code: L-arabinose isomerase (500 aa).

Mn(2+) is bound by residues Glu306, Glu333, His350, and His450.

This sequence belongs to the arabinose isomerase family. As to quaternary structure, homohexamer. Mn(2+) serves as cofactor.

The catalysed reaction is beta-L-arabinopyranose = L-ribulose. Its pathway is carbohydrate degradation; L-arabinose degradation via L-ribulose; D-xylulose 5-phosphate from L-arabinose (bacterial route): step 1/3. Functionally, catalyzes the conversion of L-arabinose to L-ribulose. This chain is L-arabinose isomerase, found in Yersinia pestis (strain Pestoides F).